Reading from the N-terminus, the 120-residue chain is Large ribosomal subunit protein uL18 (120 aa).

The protein belongs to the universal ribosomal protein uL18 family. Part of the 50S ribosomal subunit; part of the 5S rRNA/L5/L18/L25 subcomplex. Contacts the 5S and 23S rRNAs.

Its function is as follows. This is one of the proteins that bind and probably mediate the attachment of the 5S RNA into the large ribosomal subunit, where it forms part of the central protuberance. In Acidiphilium cryptum (strain JF-5), this protein is Large ribosomal subunit protein uL18.